A 251-amino-acid polypeptide reads, in one-letter code: Ubiquinone/menaquinone biosynthesis C-methyltransferase UbiE (251 aa).

Residues Thr-74, Asp-95, and 123 to 124 contribute to the S-adenosyl-L-methionine site; that span reads NA.

This sequence belongs to the class I-like SAM-binding methyltransferase superfamily. MenG/UbiE family.

It catalyses the reaction a 2-demethylmenaquinol + S-adenosyl-L-methionine = a menaquinol + S-adenosyl-L-homocysteine + H(+). It carries out the reaction a 2-methoxy-6-(all-trans-polyprenyl)benzene-1,4-diol + S-adenosyl-L-methionine = a 5-methoxy-2-methyl-3-(all-trans-polyprenyl)benzene-1,4-diol + S-adenosyl-L-homocysteine + H(+). It functions in the pathway quinol/quinone metabolism; menaquinone biosynthesis; menaquinol from 1,4-dihydroxy-2-naphthoate: step 2/2. It participates in cofactor biosynthesis; ubiquinone biosynthesis. Methyltransferase required for the conversion of demethylmenaquinol (DMKH2) to menaquinol (MKH2) and the conversion of 2-polyprenyl-6-methoxy-1,4-benzoquinol (DDMQH2) to 2-polyprenyl-3-methyl-6-methoxy-1,4-benzoquinol (DMQH2). The protein is Ubiquinone/menaquinone biosynthesis C-methyltransferase UbiE of Erwinia tasmaniensis (strain DSM 17950 / CFBP 7177 / CIP 109463 / NCPPB 4357 / Et1/99).